The primary structure comprises 128 residues: Nascent polypeptide-associated complex protein (128 aa).

The NAC-A/B domain maps to 8–75 (PRMLKKMQKM…PKKIKKEKVE (68 aa)).

The protein belongs to the NAC-alpha family. As to quaternary structure, homodimer. Interacts with the ribosome. Binds ribosomal RNA.

Contacts the emerging nascent chain on the ribosome. In Methanocaldococcus jannaschii (strain ATCC 43067 / DSM 2661 / JAL-1 / JCM 10045 / NBRC 100440) (Methanococcus jannaschii), this protein is Nascent polypeptide-associated complex protein.